We begin with the raw amino-acid sequence, 413 residues long: Gamma-glutamyl phosphate reductase (413 aa).

Belongs to the gamma-glutamyl phosphate reductase family.

The protein localises to the cytoplasm. It catalyses the reaction L-glutamate 5-semialdehyde + phosphate + NADP(+) = L-glutamyl 5-phosphate + NADPH + H(+). It participates in amino-acid biosynthesis; L-proline biosynthesis; L-glutamate 5-semialdehyde from L-glutamate: step 2/2. In terms of biological role, catalyzes the NADPH-dependent reduction of L-glutamate 5-phosphate into L-glutamate 5-semialdehyde and phosphate. The product spontaneously undergoes cyclization to form 1-pyrroline-5-carboxylate. This chain is Gamma-glutamyl phosphate reductase, found in Thermus thermophilus (strain ATCC BAA-163 / DSM 7039 / HB27).